Consider the following 359-residue polypeptide: Ni-sirohydrochlorin a,c-diamide reductive cyclase complex, component CfbD (359 aa).

This sequence belongs to the NifD/NifK/NifE/NifN family. As to quaternary structure, homodimer or monomer. The Ni-sirohydrochlorin a,c-diamide reductive cyclase complex is composed of a NifH homolog component CfbC and a NifD homolog component CfbD. Requires [4Fe-4S] cluster as cofactor.

It catalyses the reaction Ni-sirohydrochlorin a,c-diamide + 3 AH2 + ATP + H2O = 15,17(3)-seco-F430-17(3)-acid + 3 A + ADP + phosphate. Its function is as follows. Involved in the biosynthesis of the unique nickel-containing tetrapyrrole coenzyme F430, the prosthetic group of methyl-coenzyme M reductase (MCR), which plays a key role in methanogenesis and anaerobic methane oxidation. Catalyzes both the six-electron reduction of the tetrahydroporphyrin ring system and the gamma-lactamization of the c-acetamide side chain of Ni-sirohydrochlorin a,c-diamide to yield 15,17(3)-seco-F430-17(3)-acid (seco-F430), the last intermediate in the biosynthesis of the coenzyme F430. The chain is Ni-sirohydrochlorin a,c-diamide reductive cyclase complex, component CfbD from Methanothermobacter thermautotrophicus (strain ATCC 29096 / DSM 1053 / JCM 10044 / NBRC 100330 / Delta H) (Methanobacterium thermoautotrophicum).